Reading from the N-terminus, the 368-residue chain is Endophilin-A2 (368 aa).

The segment at 1–21 (MSVAGLKKQFYKASQLVSEKV) is membrane-binding amphipathic helix. The region spanning 18-249 (SEKVGGAEGT…LKRRVREASS (232 aa)) is the BAR domain. The interval 60-87 (PNPASRAKLTMLNTVSKIRGQVKNPGYP) is required for dimerization upon membrane association. Residues 180–250 (DEELRQALEK…KRRVREASSR (71 aa)) adopt a coiled-coil conformation. The interval 218–254 (LVDAQLDYHRQAVQILEELADKLKRRVREASSRPRRE) is interaction with ARC. A disordered region spans residues 243-309 (RVREASSRPR…SKSMPPLDQP (67 aa)). Basic and acidic residues predominate over residues 245–261 (REASSRPRREFKPRPQE). Ser-288 carries the phosphoserine modification. Thr-298 carries the post-translational modification Phosphothreonine. Positions 306 to 365 (LDQPSCKALYDFEPENDGELGFREGDLITLTNQIDENWYEGMLHGQSGFFPLSYVQVLVP) constitute an SH3 domain. Phosphotyrosine is present on Tyr-315.

The protein belongs to the endophilin family. Interacts with ARC, SYNJ1 and DNM1. Interacts with PDCD6IP. Interacts with BIN2. As to expression, detected in brain and testis (at protein level). Ubiquitous.

It is found in the cytoplasm. The protein localises to the early endosome membrane. Its subcellular location is the cell projection. It localises to the podosome. In terms of biological role, implicated in endocytosis. May recruit other proteins to membranes with high curvature. The chain is Endophilin-A2 (Sh3gl1) from Rattus norvegicus (Rat).